The following is a 121-amino-acid chain: Small ribosomal subunit protein uS13 (121 aa).

The interval 96–121 (PVRGQNTKNNARTRKGKAVAIAGKKK) is disordered. A compositionally biased stretch (basic residues) spans 106-121 (ARTRKGKAVAIAGKKK).

This sequence belongs to the universal ribosomal protein uS13 family. As to quaternary structure, part of the 30S ribosomal subunit. Forms a loose heterodimer with protein S19. Forms two bridges to the 50S subunit in the 70S ribosome.

In terms of biological role, located at the top of the head of the 30S subunit, it contacts several helices of the 16S rRNA. In the 70S ribosome it contacts the 23S rRNA (bridge B1a) and protein L5 of the 50S subunit (bridge B1b), connecting the 2 subunits; these bridges are implicated in subunit movement. Contacts the tRNAs in the A and P-sites. The protein is Small ribosomal subunit protein uS13 of Streptococcus pyogenes serotype M3 (strain SSI-1).